The primary structure comprises 520 residues: Ribonuclease Y (520 aa).

Residues 3–23 form a helical membrane-spanning segment; the sequence is IELAIIFIVLAAGAGFLIGNL. One can recognise a KH domain in the interval 210–273; sequence TVSVVALPSD…EVAKIALEKL (64 aa). The HD domain maps to 336–429; that stretch reads VYQHSLEVAF…VQAADALSGA (94 aa).

The protein belongs to the RNase Y family.

It is found in the cell membrane. Its function is as follows. Endoribonuclease that initiates mRNA decay. The polypeptide is Ribonuclease Y (Geobacter sulfurreducens (strain ATCC 51573 / DSM 12127 / PCA)).